Here is a 413-residue protein sequence, read N- to C-terminus: Pyruvate dehydrogenase complex subunit homolog DDB_G0271564, mitochondrial (413 aa).

The N-terminal 19 residues, 1 to 19, are a transit peptide targeting the mitochondrion; it reads MNRILKQVSNTKGKGIRFY. Residues 29–67 form the Peripheral subunit-binding (PSBD) domain; sequence YMFPSVRRLLVEYGINSSKEVTATGPQNRLLKGDVLAYI.

This sequence belongs to the 2-oxoacid dehydrogenase family.

It is found in the mitochondrion. Functionally, the pyruvate dehydrogenase complex catalyzes the overall conversion of pyruvate to acetyl-CoA and CO(2). It contains multiple copies of three enzymatic components: pyruvate dehydrogenase (E1), dihydrolipoamide acetyltransferase (E2) and lipoamide dehydrogenase (E3). This Dictyostelium discoideum (Social amoeba) protein is Pyruvate dehydrogenase complex subunit homolog DDB_G0271564, mitochondrial (pdhX).